Reading from the N-terminus, the 284-residue chain is Bifunctional protein FolD (284 aa).

Residues 165–167 (GAS), Ile190, and Ile231 each bind NADP(+).

Belongs to the tetrahydrofolate dehydrogenase/cyclohydrolase family. As to quaternary structure, homodimer.

The catalysed reaction is (6R)-5,10-methylene-5,6,7,8-tetrahydrofolate + NADP(+) = (6R)-5,10-methenyltetrahydrofolate + NADPH. It carries out the reaction (6R)-5,10-methenyltetrahydrofolate + H2O = (6R)-10-formyltetrahydrofolate + H(+). The protein operates within one-carbon metabolism; tetrahydrofolate interconversion. In terms of biological role, catalyzes the oxidation of 5,10-methylenetetrahydrofolate to 5,10-methenyltetrahydrofolate and then the hydrolysis of 5,10-methenyltetrahydrofolate to 10-formyltetrahydrofolate. In Alkaliphilus metalliredigens (strain QYMF), this protein is Bifunctional protein FolD.